The sequence spans 40 residues: Photosystem II reaction center protein L (40 aa).

The helical transmembrane segment at 19 to 39 (SLYWGLLLIFVLAVLFSNYFF) threads the bilayer.

The protein belongs to the PsbL family. As to quaternary structure, PSII is composed of 1 copy each of membrane proteins PsbA, PsbB, PsbC, PsbD, PsbE, PsbF, PsbH, PsbI, PsbJ, PsbK, PsbL, PsbM, PsbT, PsbX, PsbY, PsbZ, Psb30/Ycf12, at least 3 peripheral proteins of the oxygen-evolving complex and a large number of cofactors. It forms dimeric complexes.

It localises to the plastid. The protein localises to the chloroplast thylakoid membrane. In terms of biological role, one of the components of the core complex of photosystem II (PSII). PSII is a light-driven water:plastoquinone oxidoreductase that uses light energy to abstract electrons from H(2)O, generating O(2) and a proton gradient subsequently used for ATP formation. It consists of a core antenna complex that captures photons, and an electron transfer chain that converts photonic excitation into a charge separation. This subunit is found at the monomer-monomer interface and is required for correct PSII assembly and/or dimerization. The polypeptide is Photosystem II reaction center protein L (Nandina domestica (Heavenly bamboo)).